We begin with the raw amino-acid sequence, 603 residues long: MDWGTELWDQFEVLERHTQWGLDLLDKYVKFVKERAEVEQAYAKQLRSLVKKYLPKRPTKDDPEVKFSQQQSFVQLLQEVNDFAGQRELVAESLGIRVCLELAKYSQEMKQERKMHFQEGRRAQQQLENGFKQLENSKRKFERDCREAEKAAHTAERLDQDINATKADVEKAKQQAHLRNHMAEESKNEYAAQLQRFNRDQAHFYFSQMPQIFDKLQDMDERRATRLGAGYGLLSEAELQVVPIIGKCLEGMKVAAESVDAKNDSQVLIELHKSGFARPGDLEFEDFSQVINRVPSDSSLGTPDGRPELRAASSRSRAKRWPFGKKNKPRPPSLSLLGGHLPSTLSDGPSSPRSGRDPLAILSEISKSVKPRLASFRSFRGGRGTVATEDFSHLPPEQQRKRLQQQLEERNRELQKEEDQREALKKMKDVYEKTPQMGDPASLEPRIAETLGNIERLKLEVQKYEAWLAEAESRVLSNRGDSLSRHARPPDPPTTAPPDSSSSSTNSGSQDNKESSSEEPPSEGQDTPIYTEFDEDFEEPASPIGQCVAIYHFEGSSEGTVSMSEGEDLSLMEEDKGDGWTRVRRKQGAEGYVPTSYLRVTLN.

A required for podosome formation and interaction with AKAP9 and microtubules region spans residues Met-1–Phe-117. Residues Met-1–Phe-117 are required for translocation to the plasma membrane in response to insulin. Residues Met-1–Asp-264 enclose the F-BAR domain. The stretch at Phe-67 to Val-259 forms a coiled coil. Residues Arg-293 to Glu-539 are interaction with CDC42. Residues Arg-293–Asn-603 are interaction with PDE6G. Residues Pro-295–Pro-358 are disordered. A phosphoserine mark is found at Ser-296, Ser-298, and Ser-299. A compositionally biased stretch (basic residues) spans Ser-316 to Pro-329. Low complexity predominate over residues Ser-333–Ser-346. Phosphoserine is present on residues Ser-335 and Ser-351. The stretch at Thr-388–Asp-481 forms a coiled coil. The REM-1 domain maps to His-393 to Glu-470. The interval Ala-471–Asn-603 is required for interaction with FASLG and localization to lysosomes. Residues Ser-477–Ala-541 form a disordered region. Residue Ser-482 is modified to Phosphoserine. Residues Ala-487 to Pro-543 are interaction with DNM2 and WASL. The span at Pro-497–Gln-510 shows a compositional bias: low complexity. The tract at residues Glu-532–Asn-603 is interaction with DNM1 and WASL. Positions Pro-540–Asn-603 are required for podosome formation. The SH3 domain occupies Ser-542–Asn-603. Positions Gln-546 to Asn-603 are interaction with WAS. An interaction with ARHGAP17, DAAM1, DIAPH1 and DIAPH2 region spans residues Val-548 to Asn-603.

Belongs to the FNBP1 family. In terms of assembly, homodimerizes, the dimers can polymerize end-to-end to form filamentous structures. Interacts with AKAP9, ARHGAP17, DAAM1, DIAPH1, DIAPH2, DNM1, FASLG/FASL, GAPVD1, LYN, microtubules, PDE6G, SRC and WAS/WASP. Interacts with the ligand binding domain of the thyroid receptor (TR) in the presence of thyroid hormone. May interact with CTNNB1 and HD/HTT. Interacts specifically with GTP-bound CDC42 and RHOQ. Interacts with DNM2 and WASL. Tyrosine phosphorylated. Also phosphorylated by PKA.

The protein resides in the cytoplasm. It is found in the cytoskeleton. Its subcellular location is the cell cortex. The protein localises to the lysosome. It localises to the golgi apparatus. The protein resides in the cell membrane. It is found in the cell projection. Its subcellular location is the phagocytic cup. In terms of biological role, required to coordinate membrane tubulation with reorganization of the actin cytoskeleton during endocytosis. Binds to lipids such as phosphatidylinositol 4,5-bisphosphate and phosphatidylserine and promotes membrane invagination and the formation of tubules. Also promotes CDC42-induced actin polymerization by recruiting WASL/N-WASP which in turn activates the Arp2/3 complex. Actin polymerization may promote the fission of membrane tubules to form endocytic vesicles. Required for the formation of podosomes, actin-rich adhesion structures specific to monocyte-derived cells. May be required for the lysosomal retention of FASLG/FASL. Required for translocation of GLUT4 to the plasma membrane in response to insulin signaling. This Mus musculus (Mouse) protein is Cdc42-interacting protein 4 (Trip10).